The primary structure comprises 302 residues: Nucleotide-binding protein Bmul_0520/BMULJ_02739 (302 aa).

8–15 contributes to the ATP binding site; sequence GISGSGKS. 57–60 contacts GTP; that stretch reads DARS.

It belongs to the RapZ-like family.

In terms of biological role, displays ATPase and GTPase activities. The chain is Nucleotide-binding protein Bmul_0520/BMULJ_02739 from Burkholderia multivorans (strain ATCC 17616 / 249).